The chain runs to 154 residues: Protein FAM162A (154 aa).

The segment at 76–102 (RFKKEDEIPETVSLEMLDTAKNKMRVK) is required for proapoptotic activity. The helical transmembrane segment at 103-120 (ISYLMIALTVVGCICMVI) threads the bilayer.

This sequence belongs to the UPF0389 family. Interacts with HSP90AB1; HSP90AB1 is essential for FAM162A mitochondrial localization and pro-apoptotic activity. Interacts with VDAC2; the interaction is probably involved in inducing mitochondrial permeability transition.

Its subcellular location is the mitochondrion membrane. Proposed to be involved in regulation of apoptosis; the exact mechanism may differ between cell types/tissues. May be involved in hypoxia-induced cell death of transformed cells implicating cytochrome C release and caspase activation (such as CASP9) and inducing mitochondrial permeability transition. May be involved in hypoxia-induced cell death of neuronal cells probably by promoting release of AIFM1 from mitochondria to cytoplasm and its translocation to the nucleus; however, the involvement of caspases has been reported conflictingly. This Pongo abelii (Sumatran orangutan) protein is Protein FAM162A (FAM162A).